Consider the following 584-residue polypeptide: Arginine--tRNA ligase (584 aa).

The 'HIGH' region signature appears at 126–136 (PNIAKEMHVGH).

It belongs to the class-I aminoacyl-tRNA synthetase family. In terms of assembly, monomer.

Its subcellular location is the cytoplasm. It catalyses the reaction tRNA(Arg) + L-arginine + ATP = L-arginyl-tRNA(Arg) + AMP + diphosphate. The polypeptide is Arginine--tRNA ligase (Synechococcus sp. (strain ATCC 27144 / PCC 6301 / SAUG 1402/1) (Anacystis nidulans)).